Reading from the N-terminus, the 405-residue chain is uncharacterized protein (405 aa).

12 consecutive transmembrane segments (helical) span residues 3-23, 42-62, 73-93, 95-115, 135-155, 162-182, 209-229, 248-268, 280-300, 309-329, 346-366, and 377-397; these read IIAK…PTTE, GITQ…ILTL, PIAL…IFAV, IEML…GSVI, SLSP…GYII, YVFV…YKVL, ILWL…GFFI, KLAF…GYLI, GLGF…AFIL, LAIA…NLLI, TAGS…TYLV, and FALL…CIWV.

It belongs to the major facilitator superfamily. Bcr/CmlA family.

It is found in the cell inner membrane. This is an uncharacterized protein from Rickettsia felis (strain ATCC VR-1525 / URRWXCal2) (Rickettsia azadi).